A 413-amino-acid polypeptide reads, in one-letter code: Snake venom metalloproteinase AaPA (413 aa).

Positions 1-20 (MIQVLLVTICLAAFPYQGSS) are cleaved as a signal peptide. The propeptide occupies 21-189 (IILESGKVND…KKASQLIVST (169 aa)). The Peptidase M12B domain occupies 193–390 (RYMEIVIVVD…ENPPCILNKP (198 aa)). Residues Glu-196 and Asp-280 each contribute to the Ca(2+) site. Cystine bridges form between Cys-304–Cys-385, Cys-344–Cys-369, and Cys-346–Cys-352. His-329 is a binding site for Zn(2+). Glu-330 is an active-site residue. 2 residues coordinate Zn(2+): His-333 and His-339. Residues Cys-385, Asn-388, Val-400, Asn-403, Leu-405, Glu-407, and Asp-413 each contribute to the Ca(2+) site. Positions 391 to 413 (LRTDTVSTPVSGNELLEAEKDYD) are excised as a propeptide.

This sequence belongs to the venom metalloproteinase (M12B) family. P-I subfamily. As to quaternary structure, monomer. Requires Zn(2+) as cofactor. In terms of tissue distribution, expressed by the venom gland.

Its subcellular location is the secreted. Functionally, snake venom zinc metalloprotease that may activate prothrombin. This chain is Snake venom metalloproteinase AaPA, found in Deinagkistrodon acutus (Hundred-pace snake).